The sequence spans 144 residues: Large ribosomal subunit protein uL15 (144 aa).

The interval Met1–Pro56 is disordered. Over residues Arg21–Ala31 the composition is skewed to gly residues.

Belongs to the universal ribosomal protein uL15 family. Part of the 50S ribosomal subunit.

Its function is as follows. Binds to the 23S rRNA. The sequence is that of Large ribosomal subunit protein uL15 from Burkholderia mallei (strain NCTC 10247).